We begin with the raw amino-acid sequence, 314 residues long: 4-hydroxy-3-methylbut-2-enyl diphosphate reductase (314 aa).

A [4Fe-4S] cluster-binding site is contributed by C12. H41 and H74 together coordinate (2E)-4-hydroxy-3-methylbut-2-enyl diphosphate. 2 residues coordinate dimethylallyl diphosphate: H41 and H74. Isopentenyl diphosphate contacts are provided by H41 and H74. Residue C96 coordinates [4Fe-4S] cluster. Residue H124 participates in (2E)-4-hydroxy-3-methylbut-2-enyl diphosphate binding. H124 contributes to the dimethylallyl diphosphate binding site. H124 provides a ligand contact to isopentenyl diphosphate. E126 functions as the Proton donor in the catalytic mechanism. Position 167 (T167) interacts with (2E)-4-hydroxy-3-methylbut-2-enyl diphosphate. C197 provides a ligand contact to [4Fe-4S] cluster. Residues S225, S226, N227, and S269 each contribute to the (2E)-4-hydroxy-3-methylbut-2-enyl diphosphate site. The dimethylallyl diphosphate site is built by S225, S226, N227, and S269. Residues S225, S226, N227, and S269 each coordinate isopentenyl diphosphate.

It belongs to the IspH family. Requires [4Fe-4S] cluster as cofactor.

It carries out the reaction isopentenyl diphosphate + 2 oxidized [2Fe-2S]-[ferredoxin] + H2O = (2E)-4-hydroxy-3-methylbut-2-enyl diphosphate + 2 reduced [2Fe-2S]-[ferredoxin] + 2 H(+). The catalysed reaction is dimethylallyl diphosphate + 2 oxidized [2Fe-2S]-[ferredoxin] + H2O = (2E)-4-hydroxy-3-methylbut-2-enyl diphosphate + 2 reduced [2Fe-2S]-[ferredoxin] + 2 H(+). The protein operates within isoprenoid biosynthesis; dimethylallyl diphosphate biosynthesis; dimethylallyl diphosphate from (2E)-4-hydroxy-3-methylbutenyl diphosphate: step 1/1. Its pathway is isoprenoid biosynthesis; isopentenyl diphosphate biosynthesis via DXP pathway; isopentenyl diphosphate from 1-deoxy-D-xylulose 5-phosphate: step 6/6. In terms of biological role, catalyzes the conversion of 1-hydroxy-2-methyl-2-(E)-butenyl 4-diphosphate (HMBPP) into a mixture of isopentenyl diphosphate (IPP) and dimethylallyl diphosphate (DMAPP). Acts in the terminal step of the DOXP/MEP pathway for isoprenoid precursor biosynthesis. The sequence is that of 4-hydroxy-3-methylbut-2-enyl diphosphate reductase from Haemophilus influenzae (strain PittGG).